The following is a 480-amino-acid chain: ESX-1 secretion system ATPase EccB1 (480 aa).

The chain crosses the membrane as a helical span at residues 44-64; sequence IALGIVVAVLILAGAALLAYF. The tract at residues 461-480 is disordered; sequence DTLPADPSPRKVPAGASGAP.

It belongs to the EccB family. Part of the ESX-1 / type VII secretion system (T7SS), which is composed of cytosolic and membrane components. The ESX-1 membrane complex is composed of EccB1, EccCa1, EccCb1, EccD1 and EccE1.

The protein resides in the cell inner membrane. An ATPase. Part of the ESX-1 specialized secretion system, which delivers several virulence factors to host cells during infection, including the key virulence factors EsxA (ESAT-6) and EsxB (CFP-10). The protein is ESX-1 secretion system ATPase EccB1 of Mycobacterium tuberculosis (strain CDC 1551 / Oshkosh).